We begin with the raw amino-acid sequence, 67 residues long: Beta-defensin 103A (67 aa).

The first 22 residues, 1 to 22 (MRIHYLLFTLLFLFLVPVPGHG), serve as a signal peptide directing secretion. 3 cysteine pairs are disulfide-bonded: Cys-33/Cys-62, Cys-40/Cys-55, and Cys-45/Cys-63.

It belongs to the beta-defensin family.

It localises to the secreted. Exhibits antimicrobial activity against Gram-positive and Gram-negative bacteria. The sequence is that of Beta-defensin 103A (DEFB103A) from Gorilla gorilla gorilla (Western lowland gorilla).